We begin with the raw amino-acid sequence, 241 residues long: DNA repair protein RecO (241 aa).

It belongs to the RecO family.

In terms of biological role, involved in DNA repair and RecF pathway recombination. In Orientia tsutsugamushi (strain Ikeda) (Rickettsia tsutsugamushi), this protein is DNA repair protein RecO.